The primary structure comprises 184 residues: Ribosome-recycling factor (184 aa).

It belongs to the RRF family.

It is found in the cytoplasm. Functionally, responsible for the release of ribosomes from messenger RNA at the termination of protein biosynthesis. May increase the efficiency of translation by recycling ribosomes from one round of translation to another. The protein is Ribosome-recycling factor of Psychrobacter sp. (strain PRwf-1).